A 242-amino-acid chain; its full sequence is Endoglucanase (242 aa).

Positions 1–21 are cleaved as a signal peptide; that stretch reads MQVIVLPLVFLATFATSGSLA. The active-site Nucleophile is D47. 3 N-linked (GlcNAc...) asparagine glycosylation sites follow: N79, N103, and N217.

This sequence belongs to the glycosyl hydrolase 45 (cellulase K) family. In terms of tissue distribution, expressed in larval carcasses and gut, and adult gut.

The protein resides in the secreted. It carries out the reaction Endohydrolysis of (1-&gt;4)-beta-D-glucosidic linkages in cellulose, lichenin and cereal beta-D-glucans.. The polypeptide is Endoglucanase (Phaedon cochleariae (Mustard beetle)).